Reading from the N-terminus, the 517-residue chain is Gallate 1-beta-glucosyltransferase 84A24 (517 aa).

His19 (proton acceptor) is an active-site residue. An an anthocyanidin-binding site is contributed by His19. UDP-alpha-D-glucose contacts are provided by Gln344, His359, Trp362, Asn363, Ser364, and Glu367. Gly382 contributes to the an anthocyanidin binding site. UDP-alpha-D-glucose contacts are provided by Asp383 and Gln384.

It belongs to the UDP-glycosyltransferase family. Highly expressed in leaf. Also expressed in peel, stem, root and aril.

It is found in the cytoplasm. The enzyme catalyses 3,4,5-trihydroxybenzoate + UDP-alpha-D-glucose = 1-O-galloyl-beta-D-glucose + UDP. The catalysed reaction is 3,4-dihydroxybenzoate + UDP-alpha-D-glucose = 1-O-(3,4-dihydroxy-benzoyl)-beta-D-glucose + UDP. It catalyses the reaction 4-hydroxybenzoate + UDP-alpha-D-glucose = 4-(beta-D-glucosyloxy)benzoate + UDP + H(+). It carries out the reaction (E)-cinnamate + UDP-alpha-D-glucose = 1-O-(trans-cinnamoyl)-beta-D-glucose + UDP. The enzyme catalyses (E)-sinapate + UDP-alpha-D-glucose = 1-O-(trans-sinapoyl)-beta-D-glucose + UDP. The catalysed reaction is (E)-4-coumarate + UDP-alpha-D-glucose = 1-O-(trans-4-coumaroyl)-beta-D-glucose + UDP. It catalyses the reaction (E)-caffeate + UDP-alpha-D-glucose = 1-O-[(E)-caffeoyl]-beta-D-glucose + UDP. It carries out the reaction (E)-ferulate + UDP-alpha-D-glucose = 1-O-[(E)-feruloyl]-beta-D-glucose + UDP. The enzyme catalyses genistein + UDP-alpha-D-glucose = genistein 7-O-beta-D-glucoside + UDP + H(+). The catalysed reaction is apigenin + UDP-alpha-D-glucose = apigenin 7-O-beta-D-glucoside + UDP + H(+). It catalyses the reaction luteolin + UDP-alpha-D-glucose = luteolin 7-O-beta-D-glucoside + UDP + H(+). Functionally, glucosyltransferase that catalyzes the formation of 1-O-beta-D-glucose esters with hydroxybenzoic acids and cinnamic acid including its derivatives as preferred glucosyl acceptors. Has significant activity with gallic acid (3,4,5-trihydroxybenzoic acid), 3,4-dihydroxybenzoic acid, 4-hydroxybenzoic acid, cinnamic acid, sinapic acid, coumaric acid, caffeic acid and ferulic acid in vitro. Gallic acid is the predicted native substrate of the enzyme, which thus catalyzes the formation of 1-O-galloyl-beta-D-glucose, the first committed step of hydrolyzable tannins (HTs) biosynthesis, with punicalagin isomers being the major HTs of pomegranate. Catalyzes the formation of flavonoid glucosides with genistein, apigenin and luteolin in vitro. Has low activity with benzoic acid, 2-hydroxybenzoic acid, 3-hydroxybenzoic acid, 2,4-dihydroxybenzoic acid, naringenin and quercetin. No activity with catechol, resveratrol, chlorogenic acid, catechin and epicatechin (building blocks of proanthocyanidins) or cyanidin, delphinidin and pelargonidin (the three anthocyanidins). The protein is Gallate 1-beta-glucosyltransferase 84A24 of Punica granatum (Pomegranate).